The sequence spans 207 residues: Putative 3-methyladenine DNA glycosylase (207 aa).

It belongs to the DNA glycosylase MPG family.

This is Putative 3-methyladenine DNA glycosylase from Listeria monocytogenes serotype 4a (strain HCC23).